A 98-amino-acid chain; its full sequence is uncharacterized protein (98 aa).

This is an uncharacterized protein from Ureaplasma parvum serovar 3 (strain ATCC 700970).